A 132-amino-acid chain; its full sequence is Small ribosomal subunit protein uS11 (132 aa).

The protein belongs to the universal ribosomal protein uS11 family. As to quaternary structure, part of the 30S ribosomal subunit. Interacts with proteins S7 and S18. Binds to IF-3.

In terms of biological role, located on the platform of the 30S subunit, it bridges several disparate RNA helices of the 16S rRNA. Forms part of the Shine-Dalgarno cleft in the 70S ribosome. This Chlamydia felis (strain Fe/C-56) (Chlamydophila felis) protein is Small ribosomal subunit protein uS11.